Consider the following 76-residue polypeptide: Small ribosomal subunit protein eS17 (76 aa).

Belongs to the eukaryotic ribosomal protein eS17 family.

The chain is Small ribosomal subunit protein eS17 from Metallosphaera sedula (strain ATCC 51363 / DSM 5348 / JCM 9185 / NBRC 15509 / TH2).